The chain runs to 293 residues: Undecaprenyl-diphosphatase (293 aa).

Helical transmembrane passes span I3–P23, K43–F63, V85–I105, L109–A129, F178–G198, V203–E223, I238–L258, and F269–I289.

It belongs to the UppP family.

The protein localises to the cell inner membrane. The catalysed reaction is di-trans,octa-cis-undecaprenyl diphosphate + H2O = di-trans,octa-cis-undecaprenyl phosphate + phosphate + H(+). Its function is as follows. Catalyzes the dephosphorylation of undecaprenyl diphosphate (UPP). Confers resistance to bacitracin. This Cupriavidus metallidurans (strain ATCC 43123 / DSM 2839 / NBRC 102507 / CH34) (Ralstonia metallidurans) protein is Undecaprenyl-diphosphatase.